The following is a 547-amino-acid chain: Chaperonin GroEL (547 aa).

Residues 30–33 (TLGP), lysine 51, 87–91 (DGTTT), glycine 415, 480–482 (NAA), and aspartate 496 each bind ATP. The tract at residues 525 to 547 (KPDDKPAMPPMGGGMGGMGGMDF) is disordered. Gly residues predominate over residues 535–547 (MGGGMGGMGGMDF).

Belongs to the chaperonin (HSP60) family. Forms a cylinder of 14 subunits composed of two heptameric rings stacked back-to-back. Interacts with the co-chaperonin GroES.

Its subcellular location is the cytoplasm. The enzyme catalyses ATP + H2O + a folded polypeptide = ADP + phosphate + an unfolded polypeptide.. Together with its co-chaperonin GroES, plays an essential role in assisting protein folding. The GroEL-GroES system forms a nano-cage that allows encapsulation of the non-native substrate proteins and provides a physical environment optimized to promote and accelerate protein folding. In Novosphingobium aromaticivorans (strain ATCC 700278 / DSM 12444 / CCUG 56034 / CIP 105152 / NBRC 16084 / F199), this protein is Chaperonin GroEL.